The sequence spans 642 residues: Chaperone protein HtpG (642 aa).

An a; substrate-binding region spans residues 1–350 (MATDTQKETL…SNDLSLNVSR (350 aa)). Positions 351–567 (EILQNDHAVD…EYDMGLQMRR (217 aa)) are b. Positions 568–642 (LLEQAGQKLP…MNKLIVQLSK (75 aa)) are c.

Belongs to the heat shock protein 90 family. In terms of assembly, homodimer.

Its subcellular location is the cytoplasm. Functionally, molecular chaperone. Has ATPase activity. This chain is Chaperone protein HtpG, found in Marinomonas sp. (strain MWYL1).